The following is a 355-amino-acid chain: UDP-N-acetylglucosamine--N-acetylmuramyl-(pentapeptide) pyrophosphoryl-undecaprenol N-acetylglucosamine transferase (355 aa).

UDP-N-acetyl-alpha-D-glucosamine contacts are provided by residues 15 to 17 (TGG), asparagine 127, arginine 163, serine 191, isoleucine 244, 263 to 268 (ALTVSE), and glutamine 288.

Belongs to the glycosyltransferase 28 family. MurG subfamily.

Its subcellular location is the cell inner membrane. It catalyses the reaction di-trans,octa-cis-undecaprenyl diphospho-N-acetyl-alpha-D-muramoyl-L-alanyl-D-glutamyl-meso-2,6-diaminopimeloyl-D-alanyl-D-alanine + UDP-N-acetyl-alpha-D-glucosamine = di-trans,octa-cis-undecaprenyl diphospho-[N-acetyl-alpha-D-glucosaminyl-(1-&gt;4)]-N-acetyl-alpha-D-muramoyl-L-alanyl-D-glutamyl-meso-2,6-diaminopimeloyl-D-alanyl-D-alanine + UDP + H(+). It participates in cell wall biogenesis; peptidoglycan biosynthesis. Its function is as follows. Cell wall formation. Catalyzes the transfer of a GlcNAc subunit on undecaprenyl-pyrophosphoryl-MurNAc-pentapeptide (lipid intermediate I) to form undecaprenyl-pyrophosphoryl-MurNAc-(pentapeptide)GlcNAc (lipid intermediate II). This chain is UDP-N-acetylglucosamine--N-acetylmuramyl-(pentapeptide) pyrophosphoryl-undecaprenol N-acetylglucosamine transferase, found in Shigella boydii serotype 18 (strain CDC 3083-94 / BS512).